The sequence spans 31 residues: Cytochrome b6-f complex subunit 6 (31 aa).

A helical membrane pass occupies residues 4-24 (ITSYFGFLLAVLIITSSLFIG).

Belongs to the PetL family. In terms of assembly, the 4 large subunits of the cytochrome b6-f complex are cytochrome b6, subunit IV (17 kDa polypeptide, PetD), cytochrome f and the Rieske protein, while the 4 small subunits are PetG, PetL, PetM and PetN. The complex functions as a dimer.

Its subcellular location is the plastid. The protein localises to the chloroplast thylakoid membrane. Functionally, component of the cytochrome b6-f complex, which mediates electron transfer between photosystem II (PSII) and photosystem I (PSI), cyclic electron flow around PSI, and state transitions. PetL is important for photoautotrophic growth as well as for electron transfer efficiency and stability of the cytochrome b6-f complex. This is Cytochrome b6-f complex subunit 6 from Phaseolus vulgaris (Kidney bean).